Consider the following 274-residue polypeptide: Aliphatic sulfonates import ATP-binding protein SsuB 2 (274 aa).

The 222-residue stretch at 21-242 (LALRGVARRF…SRGSARLAAL (222 aa)) folds into the ABC transporter domain. 53–60 (GRSGCGKS) contacts ATP.

It belongs to the ABC transporter superfamily. Aliphatic sulfonates importer (TC 3.A.1.17.2) family. In terms of assembly, the complex is composed of two ATP-binding proteins (SsuB), two transmembrane proteins (SsuC) and a solute-binding protein (SsuA).

Its subcellular location is the cell inner membrane. The catalysed reaction is ATP + H2O + aliphatic sulfonate-[sulfonate-binding protein]Side 1 = ADP + phosphate + aliphatic sulfonateSide 2 + [sulfonate-binding protein]Side 1.. In terms of biological role, part of the ABC transporter complex SsuABC involved in aliphatic sulfonates import. Responsible for energy coupling to the transport system. This Pseudomonas aeruginosa (strain UCBPP-PA14) protein is Aliphatic sulfonates import ATP-binding protein SsuB 2.